Reading from the N-terminus, the 419-residue chain is Tyrosine--tRNA ligase (419 aa).

Residue tyrosine 34 participates in L-tyrosine binding. The 'HIGH' region signature appears at proline 39–histidine 48. L-tyrosine is bound by residues tyrosine 168 and glutamine 172. Residues lysine 230–serine 234 carry the 'KMSKS' region motif. Lysine 233 is a binding site for ATP. Residues alanine 352–tyrosine 418 enclose the S4 RNA-binding domain.

The protein belongs to the class-I aminoacyl-tRNA synthetase family. TyrS type 1 subfamily. Homodimer.

It is found in the cytoplasm. It catalyses the reaction tRNA(Tyr) + L-tyrosine + ATP = L-tyrosyl-tRNA(Tyr) + AMP + diphosphate + H(+). Its function is as follows. Catalyzes the attachment of tyrosine to tRNA(Tyr) in a two-step reaction: tyrosine is first activated by ATP to form Tyr-AMP and then transferred to the acceptor end of tRNA(Tyr). This chain is Tyrosine--tRNA ligase, found in Listeria monocytogenes serotype 4b (strain CLIP80459).